An 843-amino-acid polypeptide reads, in one-letter code: Protein P (843 aa).

Residues 1-177 are terminal protein domain (TP); the sequence is MPLSYPHFRK…FCGSPYSWEQ (177 aa). Positions 178–346 are spacer; sequence ELQHGSTSLN…YCLSHIINLL (169 aa). Residues 284-308 are disordered; it reads EANPSLSTSKRHTSTGNAVELNPVP. Residues 347–690 form a polymerase/reverse transcriptase domain (RT) region; the sequence is EDWGPCYEHG…YMNLYPVARQ (344 aa). The region spanning 357-600 is the Reverse transcriptase domain; it reads QHHIRTPRTP…YNLHFMGYVI (244 aa). Mg(2+) contacts are provided by Asp429, Asp551, and Asp552.

Belongs to the hepadnaviridae P protein family.

It carries out the reaction DNA(n) + a 2'-deoxyribonucleoside 5'-triphosphate = DNA(n+1) + diphosphate. It catalyses the reaction Endonucleolytic cleavage to 5'-phosphomonoester.. Activated by host HSP70 and HSP40 in vitro to be able to bind the epsilon loop of the pgRNA. Because deletion of the RNase H region renders the protein partly chaperone-independent, the chaperones may be needed indirectly to relieve occlusion of the RNA-binding site by this domain. Inhibited by several reverse-transcriptase inhibitors: Lamivudine, Adefovir and Entecavir. Functionally, multifunctional enzyme that converts the viral RNA genome into dsDNA in viral cytoplasmic capsids. This enzyme displays a DNA polymerase activity that can copy either DNA or RNA templates, and a ribonuclease H (RNase H) activity that cleaves the RNA strand of RNA-DNA heteroduplexes in a partially processive 3'- to 5'-endonucleasic mode. Neo-synthesized pregenomic RNA (pgRNA) are encapsidated together with the P protein, and reverse-transcribed inside the nucleocapsid. Initiation of reverse-transcription occurs first by binding the epsilon loop on the pgRNA genome, and is initiated by protein priming, thereby the 5'-end of (-)DNA is covalently linked to P protein. Partial (+)DNA is synthesized from the (-)DNA template and generates the relaxed circular DNA (RC-DNA) genome. After budding and infection, the RC-DNA migrates in the nucleus, and is converted into a plasmid-like covalently closed circular DNA (cccDNA). The activity of P protein does not seem to be necessary for cccDNA generation, and is presumably released from (+)DNA by host nuclear DNA repair machinery. This chain is Protein P, found in Homo sapiens (Human).